Consider the following 94-residue polypeptide: Protein RnfH (94 aa).

Belongs to the UPF0125 (RnfH) family.

The protein is Protein RnfH of Serratia proteamaculans (strain 568).